Consider the following 344-residue polypeptide: Serpentine receptor class alpha-27 (344 aa).

Helical transmembrane passes span 28-48 (SIWM…TFYL), 67-87 (QILL…FLEI), 128-148 (GLLS…TVYV), 157-177 (MLIT…YGGV), 203-223 (AIFW…LLNI), 252-272 (ICSV…ALAI), and 287-307 (INIQ…VLIY).

The protein belongs to the nematode receptor-like protein sra family.

The protein localises to the membrane. This chain is Serpentine receptor class alpha-27 (sra-27), found in Caenorhabditis elegans.